Consider the following 446-residue polypeptide: Elongation factor Ts, mitochondrial (446 aa).

The N-terminal 33 residues, 1–33 (MSGSRSALSVVRLAACAKPCTLGSTSSVLTRPF), are a transit peptide targeting the mitochondrion.

This sequence belongs to the EF-Ts family.

It is found in the mitochondrion. Functionally, associates with the EF-Tu.GDP complex and induces the exchange of GDP to GTP. It remains bound to the aminoacyl-tRNA.EF-Tu.GTP complex up to the GTP hydrolysis stage on the ribosome. The sequence is that of Elongation factor Ts, mitochondrial from Mycosarcoma maydis (Corn smut fungus).